Consider the following 528-residue polypeptide: Na(+)/H(+) antiporter NhaB (528 aa).

11 consecutive transmembrane segments (helical) span residues 10 to 30 (IGNFLGNSPKWYKIAILSFLI), 63 to 83 (YPLQPGGLLAIEAVAIGMTSA), 96 to 116 (VLLLLVFMVAGIYFMKQLLLF), 131 to 165 (VSLMFCLTSAFLSAFLDALTVIAVIIAVAVGFYAI), 204 to 224 (LLMHAGVGTALGGVCTMVGEP), 240 to 260 (FVIRMSPVTVPVLIAGILTCL), 305 to 325 (VLVGVWLIAGLALHLASVGLV), 359 to 379 (LAVFFAVVAVIIDQHLFAPVI), 391 to 411 (LVIFYIANGLLSMVSDNVFVG), 449 to 469 (ATPNGQAAFLFLLTSALAPLI), and 476 to 496 (MVWMALPYTIVLSVVGVLAIE).

This sequence belongs to the NhaB Na(+)/H(+) (TC 2.A.34) antiporter family.

It is found in the cell inner membrane. The enzyme catalyses 2 Na(+)(in) + 3 H(+)(out) = 2 Na(+)(out) + 3 H(+)(in). Na(+)/H(+) antiporter that extrudes sodium in exchange for external protons. In Shewanella putrefaciens (strain CN-32 / ATCC BAA-453), this protein is Na(+)/H(+) antiporter NhaB.